The chain runs to 267 residues: Dichloromethane dehalogenase (267 aa).

Residues 3 to 85 (TKLRYLHHPA…YLSEKYDCSS (83 aa)) enclose the GST N-terminal domain. Positions 91–224 (TLEERGHIQQ…AWQYENVRKY (134 aa)) constitute a GST C-terminal domain.

Belongs to the GST superfamily. As to quaternary structure, homohexamer.

It is found in the cytoplasm. It carries out the reaction dichloromethane + H2O = formaldehyde + 2 chloride + 2 H(+). It participates in xenobiotic degradation; dichloromethane degradation. The sequence is that of Dichloromethane dehalogenase (dcmA) from Methylophilus leisingeri (strain DSM 6813 / VKM B-2013 / DM11).